A 107-amino-acid polypeptide reads, in one-letter code: Ubiquitin-related modifier 1 (107 aa).

A 1-thioglycine modification is found at Gly107. A Glycyl lysine isopeptide (Gly-Lys) (interchain with K-? in acceptor proteins) cross-link involves residue Gly107.

Belongs to the URM1 family. In terms of processing, C-terminal thiocarboxylation occurs in 2 steps, it is first acyl-adenylated (-COAMP) via the hesA/moeB/thiF part of UBA4, then thiocarboxylated (-COSH) via the rhodanese domain of UBA4.

Its subcellular location is the cytoplasm. It participates in tRNA modification; 5-methoxycarbonylmethyl-2-thiouridine-tRNA biosynthesis. In terms of biological role, acts as a sulfur carrier required for 2-thiolation of mcm(5)S(2)U at tRNA wobble positions of cytosolic tRNA(Lys), tRNA(Glu) and tRNA(Gln). Serves as sulfur donor in tRNA 2-thiolation reaction by being thiocarboxylated (-COSH) at its C-terminus by the MOCS3 homolog UBA4. The sulfur is then transferred to tRNA to form 2-thiolation of mcm(5)S(2)U. Prior mcm(5) tRNA modification by the elongator complex is required for 2-thiolation. Also acts as a ubiquitin-like protein (UBL) that is covalently conjugated via an isopeptide bond to lysine residues of target proteins such as AHP1. The thiocarboxylated form serves as substrate for conjugation and oxidative stress specifically induces the formation of UBL-protein conjugates. The polypeptide is Ubiquitin-related modifier 1 (Mycosarcoma maydis (Corn smut fungus)).